We begin with the raw amino-acid sequence, 415 residues long: von Willebrand factor A domain-containing protein 1 (415 aa).

An N-terminal signal peptide occupies residues 1–18 (MLFWTAFSMALSLRLALA). The VWFA domain occupies 34–209 (DLLFLLDSSA…IIARELRGSI (176 aa)). Phosphoserine is present on residues Ser74, Ser80, and Ser93. 2 Fibronectin type-III domains span residues 214 to 305 (QPQQ…LQEE) and 307 to 403 (GPER…TRAP). N-linked (GlcNAc...) asparagine glycosylation occurs at Asn264. Cys369 and Cys393 are joined by a disulfide. Positions 391-415 (KACTASGARTRAPQSMRPEAGPREP) are disordered.

In terms of assembly, homodimer or homomultimer; disulfide-linked. Interacts with HSPG2. In terms of processing, N-glycosylated. In terms of tissue distribution, expressed at high levels in the chondrocytes. Detected in the vasculature of neural tissues, in basement membrane structures of the peripheral nervous system, in the apical ectodermal ridge of developing limb buds, and in skeletal and cardiac muscle (at protein level).

It localises to the secreted. Its subcellular location is the extracellular space. It is found in the extracellular matrix. The protein localises to the basement membrane. Promotes matrix assembly. Involved in the organization of skeletal muscles and in the formation of neuromuscular junctions. In Mus musculus (Mouse), this protein is von Willebrand factor A domain-containing protein 1 (Vwa1).